Reading from the N-terminus, the 795-residue chain is Phenylalanine--tRNA ligase beta subunit (795 aa).

The tRNA-binding domain occupies A39–R148. The B5 domain maps to P401–D476. Mg(2+)-binding residues include D454, D460, E463, and E464. In terms of domain architecture, FDX-ACB spans S701–R794.

This sequence belongs to the phenylalanyl-tRNA synthetase beta subunit family. Type 1 subfamily. As to quaternary structure, tetramer of two alpha and two beta subunits. Mg(2+) serves as cofactor.

It is found in the cytoplasm. The enzyme catalyses tRNA(Phe) + L-phenylalanine + ATP = L-phenylalanyl-tRNA(Phe) + AMP + diphosphate + H(+). The polypeptide is Phenylalanine--tRNA ligase beta subunit (Salmonella paratyphi A (strain ATCC 9150 / SARB42)).